Here is a 308-residue protein sequence, read N- to C-terminus: Ornithine carbamoyltransferase (308 aa).

Residues 51–54 (STRT), Q78, R102, and 129–132 (HPTQ) contribute to the carbamoyl phosphate site. L-ornithine is bound by residues N160, D224, and 228–229 (SM). Residues 264–265 (CL) and R292 contribute to the carbamoyl phosphate site.

Belongs to the aspartate/ornithine carbamoyltransferase superfamily. OTCase family.

It is found in the cytoplasm. It carries out the reaction carbamoyl phosphate + L-ornithine = L-citrulline + phosphate + H(+). It participates in amino-acid biosynthesis; L-arginine biosynthesis; L-arginine from L-ornithine and carbamoyl phosphate: step 1/3. In terms of biological role, reversibly catalyzes the transfer of the carbamoyl group from carbamoyl phosphate (CP) to the N(epsilon) atom of ornithine (ORN) to produce L-citrulline. The polypeptide is Ornithine carbamoyltransferase (Caldicellulosiruptor saccharolyticus (strain ATCC 43494 / DSM 8903 / Tp8T 6331)).